The following is a 344-amino-acid chain: Angiopoietin-related protein 7 (344 aa).

A signal peptide spans 1-26 (MLKKTLSAVAWLCIFLVAFVSHPVWP). A coiled-coil region spans residues 37–116 (ELTAATCCEE…IGIMQLQAAQ (80 aa)). Asn56 carries N-linked (GlcNAc...) asparagine glycosylation. Residues 120-341 (QTSADAIYDC…RVEMKIRPED (222 aa)) enclose the Fibrinogen C-terminal domain. A disulfide bond links Cys129 and Cys160. 2 N-linked (GlcNAc...) asparagine glycosylation sites follow: Asn251 and Asn265. Cysteines 283 and 296 form a disulfide.

In terms of assembly, homotetramer; disulfide-linked.

The protein localises to the secreted. Functionally, has a role in the formation and organization of the extracellular matrix. In the eye, it functions as a mediator of dexamethasone-induced matrix deposition in the trabecular meshwork, the tissue responsible for the outflow of the ocular aqueous humor and for the maintenance of intraocular pressure. Is a negative regulator of angiogenesis in the cornea, and plays a major role in maintaining corneal avascularity and transparency. This chain is Angiopoietin-related protein 7 (ANGPTL7), found in Bos taurus (Bovine).